We begin with the raw amino-acid sequence, 246 residues long: Uridylate kinase (246 aa).

20-23 (KISG) serves as a coordination point for ATP. The interval 28 to 33 (GDQGYG) is involved in allosteric activation by GTP. G62 is a binding site for UMP. Residues G63 and R67 each coordinate ATP. UMP is bound by residues D82 and 143 to 150 (TGNPYFTT). Residues T170, Y176, and D179 each coordinate ATP.

The protein belongs to the UMP kinase family. As to quaternary structure, homohexamer.

The protein localises to the cytoplasm. It carries out the reaction UMP + ATP = UDP + ADP. Its pathway is pyrimidine metabolism; CTP biosynthesis via de novo pathway; UDP from UMP (UMPK route): step 1/1. With respect to regulation, allosterically activated by GTP. Inhibited by UTP. Its function is as follows. Catalyzes the reversible phosphorylation of UMP to UDP. The chain is Uridylate kinase from Cereibacter sphaeroides (strain ATCC 17025 / ATH 2.4.3) (Rhodobacter sphaeroides).